A 471-amino-acid chain; its full sequence is MENFKHLPEPFRIRVIEPVKRTTRAYREEAIIKSGMNPFLLDSEDVFIDLLTDSGTGAVTQSMQAAMMRGDEAYSGSRSYYALAESVKNIFGYQYTIPTHQGRGAEQIYIPVLIKKREQEKGLDRSKMVAFSNYFFDTTQGHSQINGCTVRNVYIKEAFDTGVRYDFKGNFDLEGLERGIEEVGPNNVPYIVATITSNSAGGQPVSLANLKVMYSIAKKYDIPVVMDSARFAENAYFIKQREAEYKDWTIEQITRETYKYADMLAMSAKKDAMVPMGGLLCMKDDSFFDVYTECRTLCVVQEGFPTYGGLEGGAMERLAVGLYDGMNLDWLAYRIAQVQYLVDGLEEIGVVCQQAGGHAAFVDAGKLLPHIPADQFPAQALACELYKVAGIRAVEIGSFLLGRDPKTGKQLPCPAELLRLTIPRATYTQTHMDFIIEAFKHVKENAANIKGLTFTYEPKVLRHFTAKLKEV.

Lys-5, Lys-115, and Lys-156 each carry N6-acetyllysine. Lys-270 bears the N6-(pyridoxal phosphate)lysine mark. An N6-acetyllysine modification is found at Lys-450.

Belongs to the beta-eliminating lyase family. As to quaternary structure, homotetramer. Requires pyridoxal 5'-phosphate as cofactor.

The catalysed reaction is L-tryptophan + H2O = indole + pyruvate + NH4(+). It functions in the pathway amino-acid degradation; L-tryptophan degradation via pyruvate pathway; indole and pyruvate from L-tryptophan: step 1/1. This chain is Tryptophanase, found in Escherichia coli O6:H1 (strain CFT073 / ATCC 700928 / UPEC).